The sequence spans 103 residues: Small ribosomal subunit protein uS14c (103 aa).

Belongs to the universal ribosomal protein uS14 family. As to quaternary structure, part of the 30S ribosomal subunit.

Its subcellular location is the plastid. It is found in the chloroplast. In terms of biological role, binds 16S rRNA, required for the assembly of 30S particles. In Oryza nivara (Indian wild rice), this protein is Small ribosomal subunit protein uS14c.